Consider the following 327-residue polypeptide: Acetaldehyde dehydrogenase 5 (327 aa).

NAD(+) is bound at residue 15 to 18 (SGNI). Catalysis depends on Cys-133, which acts as the Acyl-thioester intermediate. NAD(+)-binding positions include 164-172 (SAGPGTRAN) and Asn-297.

It belongs to the acetaldehyde dehydrogenase family.

The enzyme catalyses acetaldehyde + NAD(+) + CoA = acetyl-CoA + NADH + H(+). This chain is Acetaldehyde dehydrogenase 5, found in Rhodococcus jostii (strain RHA1).